Here is a 206-residue protein sequence, read N- to C-terminus: Thymidylate kinase (206 aa).

ATP is bound at residue 11 to 18 (GIDGAGKT).

This sequence belongs to the thymidylate kinase family.

The enzyme catalyses dTMP + ATP = dTDP + ADP. Its function is as follows. Phosphorylation of dTMP to form dTDP in both de novo and salvage pathways of dTTP synthesis. The polypeptide is Thymidylate kinase (Burkholderia pseudomallei (strain 1106a)).